We begin with the raw amino-acid sequence, 46 residues long: Photosystem II reaction center protein K (46 aa).

Positions 1-9 are excised as a propeptide; that stretch reads MLILLNTFA. Residues 25 to 45 form a helical membrane-spanning segment; it reads LPLIPLFFFLLVFVWQAAVGF.

The protein belongs to the PsbK family. As to quaternary structure, PSII is composed of 1 copy each of membrane proteins PsbA, PsbB, PsbC, PsbD, PsbE, PsbF, PsbH, PsbI, PsbJ, PsbK, PsbL, PsbM, PsbT, PsbX, PsbY, Psb30/Ycf12, peripheral proteins PsbO, CyanoQ (PsbQ), PsbU, PsbV and a large number of cofactors. It forms dimeric complexes.

Its subcellular location is the cellular thylakoid membrane. Its function is as follows. One of the components of the core complex of photosystem II (PSII). PSII is a light-driven water:plastoquinone oxidoreductase that uses light energy to abstract electrons from H(2)O, generating O(2) and a proton gradient subsequently used for ATP formation. It consists of a core antenna complex that captures photons, and an electron transfer chain that converts photonic excitation into a charge separation. The sequence is that of Photosystem II reaction center protein K from Prochlorococcus marinus (strain MIT 9215).